The chain runs to 418 residues: Elongation factor 1-gamma 2 (418 aa).

In terms of domain architecture, GST N-terminal spans 1 to 82; sequence MALVLHAGSG…YVTRSKADNP (82 aa). One can recognise a GST C-terminal domain in the interval 87-215; the sequence is SLIEYAHIEQ…VKQAESVPPV (129 aa). A disordered region spans residues 210-265; the sequence is ESVPPVQKKAPPPKEQKPKEAKKEAPKEAPKPKAVEKPEEEEEAPKPKPKNPLDLL. Basic and acidic residues predominate over residues 221–246; the sequence is PPKEQKPKEAKKEAPKEAPKPKAVEK. The 161-residue stretch at 258–418 folds into the EF-1-gamma C-terminal domain; the sequence is PKNPLDLLPP…ESLLDAKCFK (161 aa).

As to quaternary structure, EF-1 is composed of four subunits: alpha, beta, delta, and gamma.

Its function is as follows. Probably plays a role in anchoring the complex to other cellular components. In Oryza sativa subsp. japonica (Rice), this protein is Elongation factor 1-gamma 2.